A 181-amino-acid polypeptide reads, in one-letter code: Large ribosomal subunit protein uL5 (181 aa).

It belongs to the universal ribosomal protein uL5 family. As to quaternary structure, part of the 50S ribosomal subunit; part of the 5S rRNA/L5/L18/L25 subcomplex. Contacts the 5S rRNA and the P site tRNA. Forms a bridge to the 30S subunit in the 70S ribosome.

Functionally, this is one of the proteins that bind and probably mediate the attachment of the 5S RNA into the large ribosomal subunit, where it forms part of the central protuberance. In the 70S ribosome it contacts protein S13 of the 30S subunit (bridge B1b), connecting the 2 subunits; this bridge is implicated in subunit movement. Contacts the P site tRNA; the 5S rRNA and some of its associated proteins might help stabilize positioning of ribosome-bound tRNAs. The chain is Large ribosomal subunit protein uL5 from Sulfurimonas denitrificans (strain ATCC 33889 / DSM 1251) (Thiomicrospira denitrificans (strain ATCC 33889 / DSM 1251)).